The sequence spans 220 residues: Iron-sulfur cluster repair protein YtfE (220 aa).

It belongs to the RIC family. YtfE subfamily. As to quaternary structure, homodimer.

It is found in the cytoplasm. Functionally, di-iron-containing protein involved in the repair of iron-sulfur clusters damaged by oxidative and nitrosative stress conditions. This is Iron-sulfur cluster repair protein YtfE from Escherichia coli O8 (strain IAI1).